A 101-amino-acid polypeptide reads, in one-letter code: Large ribosomal subunit protein bL21 (101 aa).

The protein belongs to the bacterial ribosomal protein bL21 family. Part of the 50S ribosomal subunit. Contacts protein L20.

Functionally, this protein binds to 23S rRNA in the presence of protein L20. In Corynebacterium efficiens (strain DSM 44549 / YS-314 / AJ 12310 / JCM 11189 / NBRC 100395), this protein is Large ribosomal subunit protein bL21.